The following is a 568-amino-acid chain: Potassium-transporting ATPase potassium-binding subunit (568 aa).

10 helical membrane passes run 7–27, 65–85, 135–155, 177–197, 254–274, 286–306, 383–403, 422–442, 489–509, and 530–550; these read AEIA…GLFL, SYAL…YAIL, AGLT…AAAV, VSLY…VALG, LTNL…VVAF, ALIT…YWTE, GLYG…LMVG, MLAV…AAVL, LGIA…AIAG, and LFIG…FFPA.

Belongs to the KdpA family. In terms of assembly, the system is composed of three essential subunits: KdpA, KdpB and KdpC.

The protein resides in the cell inner membrane. Its function is as follows. Part of the high-affinity ATP-driven potassium transport (or Kdp) system, which catalyzes the hydrolysis of ATP coupled with the electrogenic transport of potassium into the cytoplasm. This subunit binds the periplasmic potassium ions and delivers the ions to the membrane domain of KdpB through an intramembrane tunnel. This is Potassium-transporting ATPase potassium-binding subunit from Beijerinckia indica subsp. indica (strain ATCC 9039 / DSM 1715 / NCIMB 8712).